A 130-amino-acid chain; its full sequence is Small ribosomal subunit protein uS8 (130 aa).

It belongs to the universal ribosomal protein uS8 family. Part of the 30S ribosomal subunit. Contacts proteins S5 and S12.

In terms of biological role, one of the primary rRNA binding proteins, it binds directly to 16S rRNA central domain where it helps coordinate assembly of the platform of the 30S subunit. This chain is Small ribosomal subunit protein uS8, found in Coxiella burnetii (strain RSA 331 / Henzerling II).